The primary structure comprises 224 residues: Leucyl/phenylalanyl-tRNA--protein transferase (224 aa).

The protein belongs to the L/F-transferase family.

It is found in the cytoplasm. It catalyses the reaction N-terminal L-lysyl-[protein] + L-leucyl-tRNA(Leu) = N-terminal L-leucyl-L-lysyl-[protein] + tRNA(Leu) + H(+). It carries out the reaction N-terminal L-arginyl-[protein] + L-leucyl-tRNA(Leu) = N-terminal L-leucyl-L-arginyl-[protein] + tRNA(Leu) + H(+). The enzyme catalyses L-phenylalanyl-tRNA(Phe) + an N-terminal L-alpha-aminoacyl-[protein] = an N-terminal L-phenylalanyl-L-alpha-aminoacyl-[protein] + tRNA(Phe). Functions in the N-end rule pathway of protein degradation where it conjugates Leu, Phe and, less efficiently, Met from aminoacyl-tRNAs to the N-termini of proteins containing an N-terminal arginine or lysine. This is Leucyl/phenylalanyl-tRNA--protein transferase from Rhodopseudomonas palustris (strain HaA2).